The primary structure comprises 156 residues: Small ribosomal subunit protein uS7 (156 aa).

It belongs to the universal ribosomal protein uS7 family. As to quaternary structure, part of the 30S ribosomal subunit. Contacts proteins S9 and S11.

One of the primary rRNA binding proteins, it binds directly to 16S rRNA where it nucleates assembly of the head domain of the 30S subunit. Is located at the subunit interface close to the decoding center, probably blocks exit of the E-site tRNA. This Finegoldia magna (strain ATCC 29328 / DSM 20472 / WAL 2508) (Peptostreptococcus magnus) protein is Small ribosomal subunit protein uS7.